Here is a 662-residue protein sequence, read N- to C-terminus: Probable actin-related protein 8 (662 aa).

Basic and acidic residues-rich tracts occupy residues 50-59 (AGEKDAKETE) and 67-77 (TKQDDSKKSQV). The segment at 50–92 (AGEKDAKETESESANGDTKQDDSKKSQVEEEEDGIEESELGEE) is disordered. Over residues 78 to 89 (EEEEDGIEESEL) the composition is skewed to acidic residues. 339–342 (DMGA) lines the ATP pocket.

Belongs to the actin family. As to quaternary structure, component of the chromatin remodeling Ino80 complex. Exists as monomers and dimers, but the dimer is most probably the biologically relevant form required for stable interactions with histones that exploits the twofold symmetry of the nucleosome core.

The protein resides in the nucleus. Its function is as follows. Probably involved in transcription regulation via its interaction with the INO80 complex, a chromatin remodeling complex. Exhibits low basal ATPase activity, and unable to polymerize. Strongly prefer nucleosomes and H3-H4 tetramers over H2A-H2B dimers, suggesting it may act as a nucleosome recognition module within the complex. In Schizosaccharomyces pombe (strain 972 / ATCC 24843) (Fission yeast), this protein is Probable actin-related protein 8.